The primary structure comprises 165 residues: Xanthine-guanine phosphoribosyltransferase (165 aa).

Residues 41 to 42 (RG) and 98 to 106 (DDLTDTGKT) each bind 5-phospho-alpha-D-ribose 1-diphosphate. Mg(2+) is bound at residue Asp99. Guanine is bound by residues Asp102 and Ile145. Xanthine-binding residues include Asp102 and Ile145. Residues 102–106 (DTGKT) and 144–145 (WI) each bind GMP.

The protein belongs to the purine/pyrimidine phosphoribosyltransferase family. XGPT subfamily. As to quaternary structure, homotetramer. It depends on Mg(2+) as a cofactor.

Its subcellular location is the cell inner membrane. The catalysed reaction is GMP + diphosphate = guanine + 5-phospho-alpha-D-ribose 1-diphosphate. The enzyme catalyses XMP + diphosphate = xanthine + 5-phospho-alpha-D-ribose 1-diphosphate. It catalyses the reaction IMP + diphosphate = hypoxanthine + 5-phospho-alpha-D-ribose 1-diphosphate. It participates in purine metabolism; GMP biosynthesis via salvage pathway; GMP from guanine: step 1/1. Its pathway is purine metabolism; XMP biosynthesis via salvage pathway; XMP from xanthine: step 1/1. Functionally, purine salvage pathway enzyme that catalyzes the transfer of the ribosyl-5-phosphate group from 5-phospho-alpha-D-ribose 1-diphosphate (PRPP) to the N9 position of the 6-oxopurines guanine and xanthine to form the corresponding ribonucleotides GMP (guanosine 5'-monophosphate) and XMP (xanthosine 5'-monophosphate), with the release of PPi. To a lesser extent, also acts on hypoxanthine. The polypeptide is Xanthine-guanine phosphoribosyltransferase (Chelativorans sp. (strain BNC1)).